Consider the following 95-residue polypeptide: MLNMNLQFFAHKKGVGSTKNGRDSESKRLGAKRADGQFVKAGNILYRQRGTKIHPGTNVGIGGDDTLYAKVDGVLRFERVGRDKKQASVYPVVNE.

A propeptide spanning residues 1–9 (MLNMNLQFF) is cleaved from the precursor.

The protein belongs to the bacterial ribosomal protein bL27 family. The N-terminus is cleaved by ribosomal processing cysteine protease Prp.

In Agathobacter rectalis (strain ATCC 33656 / DSM 3377 / JCM 17463 / KCTC 5835 / VPI 0990) (Eubacterium rectale), this protein is Large ribosomal subunit protein bL27.